The sequence spans 361 residues: 3-galactosyl-N-acetylglucosaminide 4-alpha-L-fucosyltransferase FUT3 (361 aa).

The Cytoplasmic portion of the chain corresponds to 1-15 (MDPLGAAKPQWPWRR). The helical; Signal-anchor for type II membrane protein transmembrane segment at 16 to 34 (CLAALLFQLLVAVCFFSYL) threads the bilayer. Topologically, residues 35–361 (RVSRDDATGS…TVRSIAAWFT (327 aa)) are lumenal. The tract at residues 39 to 58 (DDATGSPRAPSGSSRQDTTP) is disordered. Asparagine 154 and asparagine 185 each carry an N-linked (GlcNAc...) asparagine glycan.

It belongs to the glycosyltransferase 10 family. Glycosylated. Highly expressed in stomach, colon, small intestine, lung and kidney and to a lesser extent in salivary gland, bladder, uterus and liver.

It localises to the golgi apparatus. The protein resides in the golgi stack membrane. The catalysed reaction is a beta-D-galactosyl-(1-&gt;3)-N-acetyl-beta-D-glucosaminyl derivative + GDP-beta-L-fucose = a beta-D-galactosyl-(1-&gt;3)-[alpha-L-fucosyl-(1-&gt;4)]-N-acetyl-beta-D-glucosaminyl derivative + GDP + H(+). It catalyses the reaction an N-acetyl-alpha-neuraminyl-(2-&gt;3)-beta-D-galactosyl-(1-&gt;4)-N-acetyl-beta-D-glucosaminyl derivative + GDP-beta-L-fucose = an alpha-Neu5Ac-(2-&gt;3)-beta-D-Gal-(1-&gt;4)-[alpha-L-Fuc-(1-&gt;3)]-beta-D-GlcNAc derivative + GDP + H(+). It carries out the reaction a beta-D-galactosyl-(1-&gt;4)-N-acetyl-beta-D-glucosaminyl derivative + GDP-beta-L-fucose = a beta-D-galactosyl-(1-&gt;4)-[alpha-L-fucosyl-(1-&gt;3)]-N-acetyl-beta-D-glucosaminyl derivative + GDP + H(+). The enzyme catalyses an alpha-Neu5Ac-(2-&gt;3)-beta-D-Gal-(1-&gt;4)-beta-D-GlcNAc-(1-&gt;3)-beta-D-Gal-(1-&gt;4)-[alpha-L-Fuc-(1-&gt;3)]-beta-D-GlcNAc derivative + GDP-beta-L-fucose = an alpha-Neu5Ac-(2-&gt;3)-beta-D-Gal-(1-&gt;4)-[alpha-L-Fuc-(1-&gt;3)]-beta-D-GlcNAc-(1-&gt;3)-beta-D-Gal-(1-&gt;4)-[alpha-L-Fuc-(1-&gt;3)]-beta-D-GlcNAc derivative + GDP + H(+). The catalysed reaction is Lc4Cer + GDP-beta-L-fucose = a lactoside III(4)-a-Fuc-Lc4Cer + GDP + H(+). It catalyses the reaction a beta-D-Gal-(1-&gt;3)-beta-D-GlcNAc-(1-&gt;3)-beta-D-Gal-(1-&gt;4)-beta-D-Glc-(1&lt;-&gt;1')-Cer(d18:1(4E)) + GDP-beta-L-fucose = a III(4)-a-Fuc-Lc4Cer(d18:1(4E)) + GDP + H(+). It carries out the reaction N-acetyl-alpha-neuraminosyl-(2-&gt;3)-beta-D-galactosyl-(1-&gt;3)-[N-acetyl-alpha-neuraminosyl-(2-&gt;6)]-N-acetyl-beta-D-glucosaminyl-(1-&gt;3)-beta-D-galactosyl-(1-&gt;4)-beta-D-glucosyl-(1&lt;-&gt;1')-N-acyl-sphing-4-enine + GDP-beta-L-fucose = N-acetyl-alpha-neuraminosyl-(2-&gt;3)-beta-D-galactosyl-(1-&gt;3)-alpha-L-fucosyl-(1-&gt;4)-[N-acetyl-alpha-neuraminosyl-(2-&gt;6)-N-acetyl-beta-D-glucosaminyl-(1-&gt;3)]-beta-D-galactosyl-(1-&gt;4)-beta-D-glucosyl-(1&lt;-&gt;1')-N-acyl-sphing-4-enine + GDP + H(+). The enzyme catalyses N-acetyl-alpha-neuraminosyl-(2-&gt;3)-beta-D-galactosyl-(1-&gt;3)-N-acetyl-beta-D-glucosaminyl-(1-&gt;3)-beta-D-galactosyl-(1-&gt;4)-beta-D-glucosyl-(1&lt;-&gt;1')-N-acyl-sphing-4-enine + GDP-beta-L-fucose = N-acetyl-alpha-neuraminosyl-(2-&gt;3)-beta-D-galactosyl-(1-&gt;3)-alpha-L-fucosyl-(1-&gt;4)-[N-acetyl-beta-D-glucosaminyl-(1-&gt;3)]-beta-D-galactosyl-(1-&gt;4)-beta-D-glucosyl-(1&lt;-&gt;1')-N-acyl-sphing-4-enine + GDP + H(+). The catalysed reaction is beta-D-galactosyl-(1-&gt;3)-N-acetyl-D-glucosamine + GDP-beta-L-fucose = beta-D-galactosyl-(1-&gt;3)-[alpha-L-fucosyl-(1-&gt;4)]-N-acetyl-D-glucosamine + GDP + H(+). It catalyses the reaction alpha-L-Fuc-(1-&gt;2)-beta-D-Gal-(1-&gt;3)-D-GlcNAc + GDP-beta-L-fucose = alpha-L-Fuc-(1-&gt;2)-beta-D-Gal-(1-&gt;3)-[alpha-L-Fuc-(1-&gt;4)]-D-GlcNAc + GDP + H(+). It carries out the reaction alpha-L-Fuc-(1-&gt;2)-beta-D-Gal-(1-&gt;4)-D-GlcNAc + GDP-beta-L-fucose = alpha-L-Fuc-(1-&gt;2)-beta-D-Gal-(1-&gt;4)-[alpha-L-Fuc-(1-&gt;3)]-D-GlcNAc + GDP + H(+). The enzyme catalyses beta-D-galactosyl-(1-&gt;4)-N-acetyl-D-glucosamine + GDP-beta-L-fucose = beta-D-galactosyl-(1-&gt;4)-[alpha-L-fucosyl-(1-&gt;3)]-N-acetyl-D-glucosamine + GDP + H(+). The catalysed reaction is lactose + GDP-beta-L-fucose = beta-D-galactosyl-(1-&gt;4)-[alpha-L-fucosyl-(1-&gt;3)]-D-glucose + GDP + H(+). It catalyses the reaction an alpha-Neu5Ac-(2-&gt;3)-beta-D-Gal-(1-&gt;3)-D-GlcNAc derivative + GDP-beta-L-fucose = an alpha-Neu5Ac-(2-&gt;3)-beta-D-Gal-(1-&gt;3)-[alpha-L-Fuc-(1-&gt;4)]-beta-D-GlcNAc derivative + GDP + H(+). The protein operates within protein modification; protein glycosylation. Functionally, catalyzes the transfer of L-fucose, from a guanosine diphosphate-beta-L-fucose, to both the subterminal N-acetyl glucosamine (GlcNAc) of type 1 chain (beta-D-Gal-(1-&gt;3)-beta-D-GlcNAc) glycolipids and oligosaccharides via an alpha(1,4) linkage, and the subterminal glucose (Glc) or GlcNAc of type 2 chain (beta-D-Gal-(1-&gt;4)-beta-D-GlcNAc) oligosaccharides via an alpha(1,3) linkage, independently of the presence of terminal alpha-L-fucosyl-(1,2) moieties on the terminal galactose of these acceptors. Through its catalytic activity, participates in the synthesis of antigens of the Lewis blood group system, i.e. Lewis a (Le(a)), lewis b (Le(b)), Lewis x/SSEA-1 (Le(x)) and lewis y (Le(y)) antigens. Also catalyzes the transfer of L-fucose to subterminal GlcNAc of sialyl- and disialyl-lactotetraosylceramide to produce sialyl Lewis a (sLe(a)) and disialyl Lewis a via an alpha(1,4) linkage and therefore may regulate cell surface sLe(a) expression and consequently regulates adhesive properties to E-selectin, cell proliferation and migration. Catalyzes the transfer of an L-fucose to 3'-sialyl-N-acetyllactosamine by an alpha(1,3) linkage, which allows the formation of sialyl-Lewis x structure and therefore may regulate the sialyl-Lewis x surface antigen expression and consequently adhesive properties to E-selectin. Prefers type 1 chain over type 2 acceptors. Type 1 tetrasaccharide is a better acceptor than type 1 disaccharide suggesting that a beta anomeric configuration of GlcNAc in the substrate is preferred. Lewis-positive (Le(+)) individuals have an active enzyme while Lewis-negative (Le(-)) individuals have an inactive enzyme. This Homo sapiens (Human) protein is 3-galactosyl-N-acetylglucosaminide 4-alpha-L-fucosyltransferase FUT3.